A 339-amino-acid chain; its full sequence is 3-isopropylmalate dehydrogenase (339 aa).

Arginine 88, arginine 98, arginine 122, and aspartate 212 together coordinate substrate. Aspartate 212, aspartate 236, and aspartate 240 together coordinate Mg(2+). Residue 272–284 coordinates NAD(+); the sequence is GSAPDIAGKGIAD.

It belongs to the isocitrate and isopropylmalate dehydrogenases family. LeuB type 2 subfamily. In terms of assembly, homodimer. Mg(2+) is required as a cofactor. Mn(2+) serves as cofactor.

The protein localises to the cytoplasm. The enzyme catalyses (2R,3S)-3-isopropylmalate + NAD(+) = 4-methyl-2-oxopentanoate + CO2 + NADH. It participates in amino-acid biosynthesis; L-leucine biosynthesis; L-leucine from 3-methyl-2-oxobutanoate: step 3/4. Its function is as follows. Catalyzes the oxidation of 3-carboxy-2-hydroxy-4-methylpentanoate (3-isopropylmalate) to 3-carboxy-4-methyl-2-oxopentanoate. The product decarboxylates to 4-methyl-2 oxopentanoate. This is 3-isopropylmalate dehydrogenase from Corynebacterium aurimucosum (strain ATCC 700975 / DSM 44827 / CIP 107346 / CN-1) (Corynebacterium nigricans).